The sequence spans 499 residues: Probable cytosol aminopeptidase (499 aa).

Lysine 263 and aspartate 268 together coordinate Mn(2+). Lysine 275 is an active-site residue. Mn(2+)-binding residues include aspartate 286, aspartate 345, and glutamate 347. The active site involves arginine 349.

The protein belongs to the peptidase M17 family. Mn(2+) is required as a cofactor.

The protein resides in the cytoplasm. It carries out the reaction Release of an N-terminal amino acid, Xaa-|-Yaa-, in which Xaa is preferably Leu, but may be other amino acids including Pro although not Arg or Lys, and Yaa may be Pro. Amino acid amides and methyl esters are also readily hydrolyzed, but rates on arylamides are exceedingly low.. It catalyses the reaction Release of an N-terminal amino acid, preferentially leucine, but not glutamic or aspartic acids.. Presumably involved in the processing and regular turnover of intracellular proteins. Catalyzes the removal of unsubstituted N-terminal amino acids from various peptides. This is Probable cytosol aminopeptidase (pepA) from Chlamydia muridarum (strain MoPn / Nigg).